We begin with the raw amino-acid sequence, 745 residues long: Elongation factor G, mitochondrial (745 aa).

Residues 40–317 (ERIRNIGISA…AVLDYLPNPG (278 aa)) enclose the tr-type G domain. GTP-binding positions include 49-56 (AHIDSGKT), 116-120 (DTPGH), and 170-173 (NKLD).

This sequence belongs to the TRAFAC class translation factor GTPase superfamily. Classic translation factor GTPase family. EF-G/EF-2 subfamily.

It is found in the mitochondrion. It participates in protein biosynthesis; polypeptide chain elongation. Mitochondrial GTPase that catalyzes the GTP-dependent ribosomal translocation step during translation elongation. During this step, the ribosome changes from the pre-translocational (PRE) to the post-translocational (POST) state as the newly formed A-site-bound peptidyl-tRNA and P-site-bound deacylated tRNA move to the P and E sites, respectively. Catalyzes the coordinated movement of the two tRNA molecules, the mRNA and conformational changes in the ribosome. Essential during development as it acts as a retrograde signal from mitochondria to the nucleus to slow down cell proliferation if mitochondrial energy output is low. This chain is Elongation factor G, mitochondrial, found in Drosophila sechellia (Fruit fly).